Here is a 125-residue protein sequence, read N- to C-terminus: Steroid Delta-isomerase (125 aa).

Y14 functions as the Proton donor in the catalytic mechanism. The active-site Proton acceptor is D38. A substrate-binding site is contributed by D99.

In terms of assembly, homodimer.

The enzyme catalyses a 3-oxo-Delta(5)-steroid = a 3-oxo-Delta(4)-steroid. This is Steroid Delta-isomerase (ksi) from Comamonas testosteroni (Pseudomonas testosteroni).